The following is a 2241-amino-acid chain: Large tegument protein deneddylase (2241 aa).

The interval Met1 to Ser238 is deubiquitination activity. Residues Thr4–Asp226 enclose the Peptidase C76 domain. Residues Cys24, Asp160, and His162 contribute to the active site. The tract at residues Ala239–Ala314 is disordered. Over residues Asp240 to Pro250 the composition is skewed to low complexity. The segment covering Ser251 to Val268 has biased composition (pro residues). A compositionally biased stretch (low complexity) spans Pro304–Ala314. The tract at residues Ser327–Pro331 is interaction with inner tegument protein. Residues Arg1170 to Ala1229 form a disordered region. Residues Thr1190–Arg1199 show a composition bias toward basic and acidic residues.

This sequence belongs to the herpesviridae large tegument protein family. In terms of assembly, interacts with host CUL1 and CUL4A; these interactions inhibit the E3 ligase activity of cullins. Interacts with inner tegument protein. Interacts with capsid vertex specific component CVC2. Interacts with the major capsid protein/MCP.

It localises to the virion tegument. The protein localises to the host cytoplasm. Its subcellular location is the host nucleus. The catalysed reaction is Thiol-dependent hydrolysis of ester, thioester, amide, peptide and isopeptide bonds formed by the C-terminal Gly of ubiquitin (a 76-residue protein attached to proteins as an intracellular targeting signal).. Its function is as follows. Large tegument protein that plays multiple roles in the viral cycle. During viral entry, remains associated with the capsid while most of the tegument is detached and participates in the capsid transport toward the host nucleus. Plays a role in the routing of the capsid at the nuclear pore complex and subsequent uncoating. Within the host nucleus, acts as a deneddylase and promotes the degradation of nuclear CRLs (cullin-RING ubiquitin ligases) and thereby stabilizes nuclear CRL substrates, while cytoplasmic CRLs remain unaffected. These modifications prevent host cell cycle S-phase progression and create a favorable environment allowing efficient viral genome replication. Participates later in the secondary envelopment of capsids. Indeed, plays a linker role for the association of the outer viral tegument to the capsids together with the inner tegument protein. In Human cytomegalovirus (strain AD169) (HHV-5), this protein is Large tegument protein deneddylase (UL48).